The sequence spans 130 residues: Small ribosomal subunit protein uS9 (130 aa).

The protein belongs to the universal ribosomal protein uS9 family.

The sequence is that of Small ribosomal subunit protein uS9 from Buchnera aphidicola subsp. Acyrthosiphon pisum (strain Tuc7).